The chain runs to 73 residues: Acyl carrier protein (73 aa).

Positions Met-1–Lys-73 constitute a Carrier domain. Ser-35 bears the O-(pantetheine 4'-phosphoryl)serine mark.

The protein belongs to the acyl carrier protein (ACP) family. Post-translationally, 4'-phosphopantetheine is transferred from CoA to a specific serine of apo-ACP by AcpS. This modification is essential for activity because fatty acids are bound in thioester linkage to the sulfhydryl of the prosthetic group.

The protein localises to the cytoplasm. It functions in the pathway lipid metabolism; fatty acid biosynthesis. Carrier of the growing fatty acid chain in fatty acid biosynthesis. The sequence is that of Acyl carrier protein from Lactococcus lactis subsp. lactis (strain IL1403) (Streptococcus lactis).